We begin with the raw amino-acid sequence, 121 residues long: Large ribosomal subunit protein uL18 (121 aa).

Belongs to the universal ribosomal protein uL18 family. In terms of assembly, part of the 50S ribosomal subunit; part of the 5S rRNA/L5/L18/L25 subcomplex. Contacts the 5S and 23S rRNAs.

Functionally, this is one of the proteins that bind and probably mediate the attachment of the 5S RNA into the large ribosomal subunit, where it forms part of the central protuberance. The polypeptide is Large ribosomal subunit protein uL18 (Paracidovorax citrulli (strain AAC00-1) (Acidovorax citrulli)).